The sequence spans 347 residues: Haptoglobin (347 aa).

The first 18 residues, 1–18 (MRALGAVVALLLCGQLFA), serve as a signal peptide directing secretion. A Sushi domain is found at 31–88 (DSCPKPPEIPKGYVEHMVRYHCQTYYKLRTAGDGVYTLDSNKQWTNKVTGEKLPECEA). Cystine bridges form between Cys52–Cys86 and Cys90–Cys207. The region spanning 103–345 (IMGGSLDAKG…ILDWIQTTIA (243 aa)) is the Peptidase S1 domain. Asn125, Asn151, Asn183, and Asn232 each carry an N-linked (GlcNAc...) asparagine glycan. Intrachain disulfides connect Cys250-Cys281 and Cys292-Cys322. Residues 259–264 (VPEKKT) are interaction with CD163.

Belongs to the peptidase S1 family. In terms of assembly, tetramer of two alpha and two beta chains; disulfide-linked. The hemoglobin/haptoglobin complex is composed of a haptoglobin dimer bound to two hemoglobin alpha-beta dimers. Interacts with CD163. Interacts with ERGIC3. As to expression, expressed by the liver and secreted in plasma.

Its subcellular location is the secreted. As a result of hemolysis, hemoglobin is found to accumulate in the kidney and is secreted in the urine. Haptoglobin captures, and combines with free plasma hemoglobin to allow hepatic recycling of heme iron and to prevent kidney damage. Haptoglobin also acts as an antioxidant, has antibacterial activity and plays a role in modulating many aspects of the acute phase response. Hemoglobin/haptoglobin complexes are rapidly cleared by the macrophage CD163 scavenger receptor expressed on the surface of liver Kupfer cells through an endocytic lysosomal degradation pathway. In Sus scrofa (Pig), this protein is Haptoglobin (HP).